A 193-amino-acid polypeptide reads, in one-letter code: Cell wall galactomannoprotein (193 aa).

The signal sequence occupies residues M1–A17. Residues N38 and N173 are each glycosylated (N-linked (GlcNAc...) asparagine).

The protein belongs to the cell wall mannoprotein 1 family. In terms of processing, galactomannoprotein, glycosylated.

The protein resides in the secreted. The protein localises to the cell wall. In terms of biological role, constitutive protein of the cell wall. The sequence is that of Cell wall galactomannoprotein from Armillaria ostoyae (Armillaria root rot fungus).